We begin with the raw amino-acid sequence, 501 residues long: Lysine--tRNA ligase (501 aa).

Mg(2+)-binding residues include Glu412 and Glu419.

It belongs to the class-II aminoacyl-tRNA synthetase family. Homodimer. Mg(2+) is required as a cofactor.

It is found in the cytoplasm. It carries out the reaction tRNA(Lys) + L-lysine + ATP = L-lysyl-tRNA(Lys) + AMP + diphosphate. This chain is Lysine--tRNA ligase, found in Dechloromonas aromatica (strain RCB).